The following is a 348-amino-acid chain: Isopentenyl-diphosphate delta-isomerase (348 aa).

11–12 is a substrate binding site; it reads RK. Residues 70 to 72, S100, and N131 each bind FMN; that span reads AMT. 100 to 102 lines the substrate pocket; the sequence is SQR. A substrate-binding site is contributed by Q165. Mg(2+) is bound at residue E166. FMN contacts are provided by residues K197, T231, 278–280, and 299–300; these read GIR and AR.

Belongs to the IPP isomerase type 2 family. In terms of assembly, homooctamer. Dimer of tetramers. Requires FMN as cofactor. The cofactor is NADPH. It depends on Mg(2+) as a cofactor.

The protein localises to the cytoplasm. It catalyses the reaction isopentenyl diphosphate = dimethylallyl diphosphate. Involved in the biosynthesis of isoprenoids. Catalyzes the 1,3-allylic rearrangement of the homoallylic substrate isopentenyl (IPP) to its allylic isomer, dimethylallyl diphosphate (DMAPP). The sequence is that of Isopentenyl-diphosphate delta-isomerase from Mycobacterium marinum (strain ATCC BAA-535 / M).